Reading from the N-terminus, the 271-residue chain is Tryptophan synthase alpha chain (271 aa).

Residues E49 and D60 each act as proton acceptor in the active site.

Belongs to the TrpA family. As to quaternary structure, tetramer of two alpha and two beta chains.

The catalysed reaction is (1S,2R)-1-C-(indol-3-yl)glycerol 3-phosphate + L-serine = D-glyceraldehyde 3-phosphate + L-tryptophan + H2O. Its pathway is amino-acid biosynthesis; L-tryptophan biosynthesis; L-tryptophan from chorismate: step 5/5. The alpha subunit is responsible for the aldol cleavage of indoleglycerol phosphate to indole and glyceraldehyde 3-phosphate. The polypeptide is Tryptophan synthase alpha chain (Burkholderia pseudomallei (strain K96243)).